The sequence spans 652 residues: Aspartate--tRNA ligase, mitochondrial (652 aa).

The N-terminal 46 residues, 1–46 (MYLGSWLNRLGRGLSRPIGKTKQPIWGSLSRSLTLSSQRVPEFSSF), are a transit peptide targeting the mitochondrion. The residue at position 218 (Thr218) is a Phosphothreonine. Position 241 is a phosphoserine (Ser241). Positions 243–246 (QQFK) are aspartate. Arg265 contributes to the L-aspartate binding site. ATP-binding positions include 265 to 267 (RDE) and Glu534. Residue Arg541 participates in L-aspartate binding. 583-586 (GLDR) is an ATP binding site.

It belongs to the class-II aminoacyl-tRNA synthetase family. Type 1 subfamily. Homodimer.

The protein localises to the mitochondrion matrix. The protein resides in the mitochondrion membrane. It catalyses the reaction tRNA(Asp) + L-aspartate + ATP = L-aspartyl-tRNA(Asp) + AMP + diphosphate. In terms of biological role, catalyzes the attachment of aspartate to tRNA(Asp) in a two-step reaction: aspartate is first activated by ATP to form Asp-AMP and then transferred to the acceptor end of tRNA(Asp). The sequence is that of Aspartate--tRNA ligase, mitochondrial (Dars2) from Rattus norvegicus (Rat).